The sequence spans 247 residues: Uridylate kinase (247 aa).

15-18 contributes to the ATP binding site; the sequence is KLSG. Positions 23 to 28 are involved in allosteric activation by GTP; that stretch reads GDEGFG. Residue Gly-57 coordinates UMP. Gly-58 and Arg-62 together coordinate ATP. Residues Asp-77 and 138 to 145 contribute to the UMP site; that span reads TGNPFFTT. 3 residues coordinate ATP: Thr-165, Tyr-171, and Asp-174.

This sequence belongs to the UMP kinase family. As to quaternary structure, homohexamer.

The protein resides in the cytoplasm. The catalysed reaction is UMP + ATP = UDP + ADP. Its pathway is pyrimidine metabolism; CTP biosynthesis via de novo pathway; UDP from UMP (UMPK route): step 1/1. With respect to regulation, allosterically activated by GTP. Inhibited by UTP. Functionally, catalyzes the reversible phosphorylation of UMP to UDP. The polypeptide is Uridylate kinase (Colwellia psychrerythraea (strain 34H / ATCC BAA-681) (Vibrio psychroerythus)).